Reading from the N-terminus, the 448-residue chain is Phosphoglucosamine mutase (448 aa).

Ser-108 serves as the catalytic Phosphoserine intermediate. Ser-108, Asp-247, Asp-249, and Asp-251 together coordinate Mg(2+). Ser-108 bears the Phosphoserine mark.

It belongs to the phosphohexose mutase family. It depends on Mg(2+) as a cofactor. In terms of processing, activated by phosphorylation.

The catalysed reaction is alpha-D-glucosamine 1-phosphate = D-glucosamine 6-phosphate. Its function is as follows. Catalyzes the conversion of glucosamine-6-phosphate to glucosamine-1-phosphate. The chain is Phosphoglucosamine mutase from Herminiimonas arsenicoxydans.